The primary structure comprises 540 residues: Berberine bridge enzyme-like 16 (540 aa).

Positions M1 to S24 are cleaved as a signal peptide. An intrachain disulfide couples C38 to C101. N59 carries N-linked (GlcNAc...) asparagine glycosylation. The FAD-binding PCMH-type domain maps to S79–V254. Residues H116–C178 constitute a cross-link (6-(S-cysteinyl)-8alpha-(pros-histidyl)-FAD (His-Cys)). N-linked (GlcNAc...) asparagine glycosylation is found at N325 and N496.

It belongs to the oxygen-dependent FAD-linked oxidoreductase family. FAD is required as a cofactor. In terms of processing, the FAD cofactor is bound via a bicovalent 6-S-cysteinyl, 8alpha-N1-histidyl FAD linkage.

Its subcellular location is the secreted. The protein resides in the cell wall. This is Berberine bridge enzyme-like 16 from Arabidopsis thaliana (Mouse-ear cress).